A 397-amino-acid chain; its full sequence is Putative F-box protein At2g04810 (397 aa).

One can recognise an F-box domain in the interval serine 20–leucine 68.

The protein is Putative F-box protein At2g04810 of Arabidopsis thaliana (Mouse-ear cress).